We begin with the raw amino-acid sequence, 283 residues long: Energy-coupling factor transporter ATP-binding protein EcfA1 (283 aa).

Residues 7-244 (VEFRHVSFTY…PELLQEIGLD (238 aa)) enclose the ABC transporter domain. Residue 41-48 (GHNGSGKS) coordinates ATP.

It belongs to the ABC transporter superfamily. Energy-coupling factor EcfA family. In terms of assembly, forms a stable energy-coupling factor (ECF) transporter complex composed of 2 membrane-embedded substrate-binding proteins (S component), 2 ATP-binding proteins (A component) and 2 transmembrane proteins (T component).

The protein resides in the cell membrane. Functionally, ATP-binding (A) component of a common energy-coupling factor (ECF) ABC-transporter complex. Unlike classic ABC transporters this ECF transporter provides the energy necessary to transport a number of different substrates. This chain is Energy-coupling factor transporter ATP-binding protein EcfA1, found in Lactobacillus acidophilus (strain ATCC 700396 / NCK56 / N2 / NCFM).